The chain runs to 244 residues: tRNA pseudouridine synthase A (244 aa).

The Nucleophile role is filled by Asp52. Tyr110 provides a ligand contact to substrate.

It belongs to the tRNA pseudouridine synthase TruA family. As to quaternary structure, homodimer.

The catalysed reaction is uridine(38/39/40) in tRNA = pseudouridine(38/39/40) in tRNA. Functionally, formation of pseudouridine at positions 38, 39 and 40 in the anticodon stem and loop of transfer RNAs. In Clostridium kluyveri (strain ATCC 8527 / DSM 555 / NBRC 12016 / NCIMB 10680 / K1), this protein is tRNA pseudouridine synthase A.